The chain runs to 197 residues: Putative NADH dehydrogenase/NAD(P)H nitroreductase Lcho_1290 (197 aa).

The protein belongs to the nitroreductase family. HadB/RutE subfamily. It depends on FMN as a cofactor.

The sequence is that of Putative NADH dehydrogenase/NAD(P)H nitroreductase Lcho_1290 from Leptothrix cholodnii (strain ATCC 51168 / LMG 8142 / SP-6) (Leptothrix discophora (strain SP-6)).